A 105-amino-acid polypeptide reads, in one-letter code: Late embryogenesis abundant protein Lea5-A (105 aa).

This sequence belongs to the LEA type 3 family.

The protein is Late embryogenesis abundant protein Lea5-A (LEA5-A) of Gossypium hirsutum (Upland cotton).